A 253-amino-acid chain; its full sequence is Large ribosomal subunit protein uL4 (253 aa).

Residues 62–107 (WGSGRGVSHVPRLKNSSRAARVPHAKGGRRAHPPKPEADRSEKVNT) are disordered. Over residues 82–94 (RVPHAKGGRRAHP) the composition is skewed to basic residues. Positions 95–107 (PKPEADRSEKVNT) are enriched in basic and acidic residues.

This sequence belongs to the universal ribosomal protein uL4 family. As to quaternary structure, part of the 50S ribosomal subunit.

Functionally, one of the primary rRNA binding proteins, this protein initially binds near the 5'-end of the 23S rRNA. It is important during the early stages of 50S assembly. It makes multiple contacts with different domains of the 23S rRNA in the assembled 50S subunit and ribosome. Forms part of the polypeptide exit tunnel. In Methanosarcina mazei (strain ATCC BAA-159 / DSM 3647 / Goe1 / Go1 / JCM 11833 / OCM 88) (Methanosarcina frisia), this protein is Large ribosomal subunit protein uL4.